Here is a 305-residue protein sequence, read N- to C-terminus: Ribonuclease HIII (305 aa).

An RNase H type-2 domain is found at 91-305 (WSVIGSDEVG…ANTQKAQKLL (215 aa)). Asp97, Glu98, and Asp201 together coordinate a divalent metal cation.

This sequence belongs to the RNase HII family. RnhC subfamily. Mn(2+) is required as a cofactor. Mg(2+) serves as cofactor.

It is found in the cytoplasm. The enzyme catalyses Endonucleolytic cleavage to 5'-phosphomonoester.. Endonuclease that specifically degrades the RNA of RNA-DNA hybrids. This is Ribonuclease HIII from Enterococcus faecalis (strain ATCC 700802 / V583).